Here is an 833-residue protein sequence, read N- to C-terminus: MutS protein homolog 5 (833 aa).

Positions M1–E45 are disordered. Position 591–598 (G591–S598) interacts with ATP.

It belongs to the DNA mismatch repair MutS family. As to quaternary structure, heterooligomer of MSH4 and MSH5. Interacts with HJURP. Interacts with REDIC1.

Involved in DNA mismatch repair and meiotic recombination processes. Facilitates crossovers between homologs during meiosis. This Mus musculus (Mouse) protein is MutS protein homolog 5 (Msh5).